A 108-amino-acid chain; its full sequence is Nucleoid-associated protein BAV0915 (108 aa).

Belongs to the YbaB/EbfC family. As to quaternary structure, homodimer.

The protein resides in the cytoplasm. Its subcellular location is the nucleoid. Its function is as follows. Binds to DNA and alters its conformation. May be involved in regulation of gene expression, nucleoid organization and DNA protection. This is Nucleoid-associated protein BAV0915 from Bordetella avium (strain 197N).